Consider the following 1578-residue polypeptide: E3 ubiquitin-protein ligase HECW2 (1578 aa).

Serine 48 is modified (phosphoserine). The region spanning 171 to 298 is the C2 domain; that stretch reads MEGGASGSLH…LERQAGDQML (128 aa). 2 disordered regions span residues 341 to 453 and 496 to 802; these read HTVN…FPTD and IDDG…PSVR. The segment covering 386 to 406 has biased composition (polar residues); sequence RTSSTLEIDTEDLISTSSRNS. The segment covering 518-532 has biased composition (basic and acidic residues); it reads ASIHETASLEERLEN. Over residues 559-576 the composition is skewed to polar residues; that stretch reads SADQGSTELCSSQEVDQP. Positions 577–593 are enriched in low complexity; the sequence is TSGADAGASDTSGGSRR. Composition is skewed to polar residues over residues 597–614, 643–664, and 688–708; these read ETES…SSET, SSCN…SSLE, and PTSS…SSLP. Low complexity-rich tracts occupy residues 721–735, 746–755, and 769–782; these read AAEA…ELGE, AAAAAPAAAA, and AQGA…QEEG. Positions 737-1074 are interaction with TP73; that stretch reads WQRRGSLEGA…PRPSSTFNTV (338 aa). Positions 813 to 846 constitute a WW 1 domain; sequence EALPPNWEARIDSHGRIFYVDHVNRTTTWQRPTA. The stretch at 853-880 forms a coiled coil; it reads LQRSNSIQQMEQLNRRYQSIRRTMTNER. A phosphoserine mark is found at serine 858 and serine 915. One can recognise a WW 2 domain in the interval 991–1024; the sequence is LELPRGWEMKHDHQGKAFFVDHNSRTTTFIDPRL. Disordered stretches follow at residues 1030-1075 and 1167-1193; these read RPTS…NTVS and CQSP…RAPA. Residues 1037–1046 are compositionally biased toward basic residues; it reads HRQHLTRQRS. A compositionally biased stretch (polar residues) spans 1167 to 1187; it reads CQSPRGSPVSSPQNSPGTQRA. The residue at position 1181 (serine 1181) is a Phosphoserine. One can recognise an HECT domain in the interval 1243 to 1578; the sequence is SRKDLQRNKL…VEETSTFGLE (336 aa). Cysteine 1546 serves as the catalytic Glycyl thioester intermediate.

Interacts with TP73. Interacts with FZR1.

It localises to the cytoplasm. The protein localises to the cytoskeleton. The protein resides in the spindle. It catalyses the reaction S-ubiquitinyl-[E2 ubiquitin-conjugating enzyme]-L-cysteine + [acceptor protein]-L-lysine = [E2 ubiquitin-conjugating enzyme]-L-cysteine + N(6)-ubiquitinyl-[acceptor protein]-L-lysine.. It participates in protein modification; protein ubiquitination. Its function is as follows. E3 ubiquitin-protein ligase that mediates ubiquitination of TP73. Acts to stabilize TP73 and enhance activation of transcription by TP73. Involved in the regulation of mitotic metaphase/anaphase transition. In Mus musculus (Mouse), this protein is E3 ubiquitin-protein ligase HECW2 (Hecw2).